Consider the following 153-residue polypeptide: Ribonuclease HI (153 aa).

The 141-residue stretch at 1–141 (MKSVNIFTDG…CDELAKLGAN (141 aa)) folds into the RNase H type-1 domain. Mg(2+)-binding residues include D9, E47, D69, and D133.

This sequence belongs to the RNase H family. As to quaternary structure, monomer. Mg(2+) is required as a cofactor.

The protein localises to the cytoplasm. It catalyses the reaction Endonucleolytic cleavage to 5'-phosphomonoester.. Endonuclease that specifically degrades the RNA of RNA-DNA hybrids. The polypeptide is Ribonuclease HI (Haemophilus ducreyi (strain 35000HP / ATCC 700724)).